A 368-amino-acid polypeptide reads, in one-letter code: F-box/kelch-repeat protein At2g44700 (368 aa).

Residues 1 to 23 (MSSSNEPPRKTDQPSSSSASASA) are disordered. A compositionally biased stretch (low complexity) spans 14–23 (PSSSSASASA). The F-box domain maps to 25 to 71 (PSLFLSLPLEIISMILARVPKRYYPILCSVSKNMRSLVRSPEIHKAR). A Kelch repeat occupies 177–221 (KVYVIGGYQDDEIAAESFDLNTQTWEAAPIPDEKESHRWICKANV).

The chain is F-box/kelch-repeat protein At2g44700 from Arabidopsis thaliana (Mouse-ear cress).